The primary structure comprises 395 residues: Zinc-regulated GTPase metalloprotein activator 1A (395 aa).

The segment at 1–22 is disordered; it reads MLPAVGSADEEEDPAEEDCPEL. Positions 8-20 are enriched in acidic residues; sequence ADEEEDPAEEDCP. The psi-PxLVp motif signature appears at 17-24; it reads EDCPELVP. 49–56 serves as a coordination point for GTP; that stretch reads GYLGAGKT. Residues C107, C109, and C110 each contribute to the Zn(2+) site. The short motif at 107–110 is the CXCC motif element; it reads CLCC. Residues 110-114 and 203-206 contribute to the GTP site; these read CSVKD and NKTD. In terms of domain architecture, CobW C-terminal spans 274 to 377; that stretch reads IVTITFEVPG…ILKQLFIATV (104 aa).

It belongs to the SIMIBI class G3E GTPase family. ZNG1 subfamily. Ubiquitously expressed. Up-regulated in cultured astrocytes treated with dopamine.

The protein localises to the nucleus. The enzyme catalyses GTP + H2O = GDP + phosphate + H(+). Zinc chaperone that directly transfers zinc cofactor to target metalloproteins, thereby activating them. Catalyzes zinc insertion into the active site of methionine aminopeptidase METAP1, which function to cleave the initiator methionine from polypeptides during or after protein translation. Mechanistically, the N-terminal psi-PxLVp motif binds to the C6H2-type zinc finger of inactive form of METAP1. After formation of the docked complex, zinc is transferred from the CXCC motif in the GTPase domain of ZNG1A to the zinc binding site in the peptidase domain of METAP1 in a process requiring GTP hydrolysis. GTP/GDP exchange is required for release of active METAP1. The polypeptide is Zinc-regulated GTPase metalloprotein activator 1A (Homo sapiens (Human)).